The following is a 1119-amino-acid chain: G8 domain-containing protein DDB_G0288475 (1119 aa).

Positions 1–22 (MKYSSFLLLFIYIFFILNNINA) are cleaved as a signal peptide. The region spanning 276–404 (TIWTSGVVPL…YHNTWTKLAA (129 aa)) is the G8 domain. 8 N-linked (GlcNAc...) asparagine glycosylation sites follow: asparagine 308, asparagine 559, asparagine 736, asparagine 854, asparagine 968, asparagine 1035, asparagine 1056, and asparagine 1070.

Belongs to the comF family.

The protein localises to the secreted. The sequence is that of G8 domain-containing protein DDB_G0288475 from Dictyostelium discoideum (Social amoeba).